We begin with the raw amino-acid sequence, 308 residues long: uncharacterized protein (308 aa).

Residues 191–211 form a helical membrane-spanning segment; sequence YLCLNLPYIIVALTLVPYSLV.

The protein localises to the host membrane. This is an uncharacterized protein from Saccharolobus islandicus (Sulfolobus islandicus).